Here is a 421-residue protein sequence, read N- to C-terminus: Enolase (421 aa).

Residue Q165 coordinates (2R)-2-phosphoglycerate. The active-site Proton donor is E207. 3 residues coordinate Mg(2+): D244, E285, and D312. (2R)-2-phosphoglycerate is bound by residues K337, R366, S367, and K388. The active-site Proton acceptor is the K337.

It belongs to the enolase family. It depends on Mg(2+) as a cofactor.

The protein resides in the cytoplasm. It is found in the secreted. The protein localises to the cell surface. It carries out the reaction (2R)-2-phosphoglycerate = phosphoenolpyruvate + H2O. It functions in the pathway carbohydrate degradation; glycolysis; pyruvate from D-glyceraldehyde 3-phosphate: step 4/5. Catalyzes the reversible conversion of 2-phosphoglycerate (2-PG) into phosphoenolpyruvate (PEP). It is essential for the degradation of carbohydrates via glycolysis. The polypeptide is Enolase (Ehrlichia chaffeensis (strain ATCC CRL-10679 / Arkansas)).